Reading from the N-terminus, the 224-residue chain is MMHALGDLFKPEEKEIKMDRDKCSGACVAIWTWKTIVRLICLIAGGVQVFMGGYIFYSISFTKDHSVQNYLSLSVVGFYACLTGLLILFAETRTRWTRRAVKVFVFLCNGLSRGIIYILIGAIDQSPIPFKFLNIITSMHIGLVCIAGGVVSIIEFLITYRRNRARLNQAIANHQQQAKGTELYDLFEREDFNNPEDAAAYDLEKGKDPNYIHQDLEMQPVQEA.

The next 4 helical transmembrane spans lie at Leu-39–Ile-59, Tyr-70–Ala-90, Val-103–Ile-123, and Met-139–Thr-159.

The protein resides in the membrane. This is an uncharacterized protein from Dictyostelium discoideum (Social amoeba).